Consider the following 323-residue polypeptide: Methenyltetrahydromethanopterin cyclohydrolase (323 aa).

Belongs to the MCH family.

It is found in the cytoplasm. It catalyses the reaction 5,10-methenyl-5,6,7,8-tetrahydromethanopterin + H2O = N(5)-formyl-5,6,7,8-tetrahydromethanopterin + H(+). Its pathway is one-carbon metabolism; methanogenesis from CO(2); 5,10-methenyl-5,6,7,8-tetrahydromethanopterin from CO(2): step 3/3. Functionally, catalyzes the reversible interconversion of 5-formyl-H(4)MPT to methenyl-H(4)MPT(+). This chain is Methenyltetrahydromethanopterin cyclohydrolase, found in Methanococcus maripaludis (strain DSM 14266 / JCM 13030 / NBRC 101832 / S2 / LL).